The following is a 122-amino-acid chain: Mth938 domain-containing protein (122 aa).

Positions 6 to 122 (IASLSWGQMK…RVGGVFHSTC (117 aa)) are MTH138-like domain.

Belongs to the AAMDC family.

It localises to the cytoplasm. May play a role in preadipocyte differentiation and adipogenesis. In Homo sapiens (Human), this protein is Mth938 domain-containing protein (AAMDC).